Here is a 414-residue protein sequence, read N- to C-terminus: Dual-specificity RNA methyltransferase RlmN (414 aa).

E127 functions as the Proton acceptor in the catalytic mechanism. Positions 133-380 constitute a Radical SAM core domain; the sequence is GEGRGTLCVS…SPIRMPRGRD (248 aa). C140 and C385 are disulfide-bonded. Residues C147, C151, and C154 each contribute to the [4Fe-4S] cluster site. S-adenosyl-L-methionine-binding positions include 211–212, S243, 265–267, and N342; these read GE and SLH. C385 serves as the catalytic S-methylcysteine intermediate.

Belongs to the radical SAM superfamily. RlmN family. [4Fe-4S] cluster is required as a cofactor.

The protein localises to the cytoplasm. It catalyses the reaction adenosine(2503) in 23S rRNA + 2 reduced [2Fe-2S]-[ferredoxin] + 2 S-adenosyl-L-methionine = 2-methyladenosine(2503) in 23S rRNA + 5'-deoxyadenosine + L-methionine + 2 oxidized [2Fe-2S]-[ferredoxin] + S-adenosyl-L-homocysteine. It carries out the reaction adenosine(37) in tRNA + 2 reduced [2Fe-2S]-[ferredoxin] + 2 S-adenosyl-L-methionine = 2-methyladenosine(37) in tRNA + 5'-deoxyadenosine + L-methionine + 2 oxidized [2Fe-2S]-[ferredoxin] + S-adenosyl-L-homocysteine. Specifically methylates position 2 of adenine 2503 in 23S rRNA and position 2 of adenine 37 in tRNAs. m2A2503 modification seems to play a crucial role in the proofreading step occurring at the peptidyl transferase center and thus would serve to optimize ribosomal fidelity. This chain is Dual-specificity RNA methyltransferase RlmN, found in Bartonella bacilliformis (strain ATCC 35685 / KC583 / Herrer 020/F12,63).